Consider the following 279-residue polypeptide: ATP synthase gamma chain (279 aa).

This sequence belongs to the ATPase gamma chain family. F-type ATPases have 2 components, CF(1) - the catalytic core - and CF(0) - the membrane proton channel. CF(1) has five subunits: alpha(3), beta(3), gamma(1), delta(1), epsilon(1). CF(0) has three main subunits: a, b and c.

The protein resides in the cell membrane. Its function is as follows. Produces ATP from ADP in the presence of a proton gradient across the membrane. The gamma chain is believed to be important in regulating ATPase activity and the flow of protons through the CF(0) complex. This Mycoplasma pneumoniae (strain ATCC 29342 / M129 / Subtype 1) (Mycoplasmoides pneumoniae) protein is ATP synthase gamma chain.